A 409-amino-acid polypeptide reads, in one-letter code: Inactive serine protease 35 (409 aa).

The N-terminal stretch at 1–17 (MLLWLIFFTPGWTLIDG) is a signal peptide. N-linked (GlcNAc...) asparagine glycans are attached at residues Asn-87 and Asn-107. In terms of domain architecture, Peptidase S1 spans 120-404 (VYGTDSRFSI…ICLWIHGNDA (285 aa)). Cysteines 150 and 166 form a disulfide. Residues 188–203 (RNKSGGKKRRGSKRSR) show a composition bias toward basic residues. A disordered region spans residues 188–246 (RNKSGGKKRRGSKRSRRETSGGDQREGPREHLQDRVKAGRRRKQSGGGQRVSEGRPSFR). The span at 204 to 224 (RETSGGDQREGPREHLQDRVK) shows a compositional bias: basic and acidic residues.

It belongs to the peptidase S1 family.

Its subcellular location is the secreted. This chain is Inactive serine protease 35 (PRSS35), found in Macaca mulatta (Rhesus macaque).